A 392-amino-acid polypeptide reads, in one-letter code: MTLLGTALRPAATRVMLLGAGELGKEVAIECQRLGIEVIAVDRYPDAPAMHVAHRSHVINMLDGEALRHVITEEKPHYIVPEIEAIATDTLRELEGEGLNVVPCARATQLTMNREGIRRLAAEELGLPTSTYRFADSEASFHDAVAAVGFPCIVKPVMSSSGKGQSFIRSAEQLAQAWEYAQQGGRAGAGRVIVEGVVKFDFEITLLTVSAVDGVHFCAPVGHRQQDGDYRESWQPQQMSELALKRAQEIARHVVLALGGHGLFGVELFVCGDEVIFSEVSPRPHDTGMVTLISQDLSEFALHVRAFLGMPVGAIRQYGPAASAVILPQLTSQNVTFDNVHAAVGAGVQVRLFGKPEIDGTRRLGVALATGENVEEAVIRAKKAASRVTVKG.

N(1)-(5-phospho-beta-D-ribosyl)glycinamide is bound by residues 22-23 (EL) and E82. Residues R114, K155, 160–165 (SSGKGQ), 195–198 (EGVV), and E203 contribute to the ATP site. The ATP-grasp domain occupies 119 to 308 (RLAAEELGLP…EFALHVRAFL (190 aa)). E267 and E279 together coordinate Mg(2+). Residues D286, K355, and 362 to 363 (RR) contribute to the N(1)-(5-phospho-beta-D-ribosyl)glycinamide site.

This sequence belongs to the PurK/PurT family. In terms of assembly, homodimer.

It carries out the reaction N(1)-(5-phospho-beta-D-ribosyl)glycinamide + formate + ATP = N(2)-formyl-N(1)-(5-phospho-beta-D-ribosyl)glycinamide + ADP + phosphate + H(+). It functions in the pathway purine metabolism; IMP biosynthesis via de novo pathway; N(2)-formyl-N(1)-(5-phospho-D-ribosyl)glycinamide from N(1)-(5-phospho-D-ribosyl)glycinamide (formate route): step 1/1. Its function is as follows. Involved in the de novo purine biosynthesis. Catalyzes the transfer of formate to 5-phospho-ribosyl-glycinamide (GAR), producing 5-phospho-ribosyl-N-formylglycinamide (FGAR). Formate is provided by PurU via hydrolysis of 10-formyl-tetrahydrofolate. This is Formate-dependent phosphoribosylglycinamide formyltransferase from Salmonella dublin (strain CT_02021853).